Consider the following 955-residue polypeptide: UvrABC system protein A (955 aa).

Residue 35-42 (GLSGSGKS) coordinates ATP. 2 ABC transporter domains span residues 322–601 (WGST…EESI) and 621–951 (GHDN…RYLK). 654–661 (GVSGSGKS) provides a ligand contact to ATP. Residues 754–780 (CEACQGDGLIKIEMHFLPDVYVKCDIC) form a C4-type zinc finger.

It belongs to the ABC transporter superfamily. UvrA family. As to quaternary structure, forms a heterotetramer with UvrB during the search for lesions.

The protein resides in the cytoplasm. The UvrABC repair system catalyzes the recognition and processing of DNA lesions. UvrA is an ATPase and a DNA-binding protein. A damage recognition complex composed of 2 UvrA and 2 UvrB subunits scans DNA for abnormalities. When the presence of a lesion has been verified by UvrB, the UvrA molecules dissociate. The chain is UvrABC system protein A from Rickettsia conorii (strain ATCC VR-613 / Malish 7).